The chain runs to 473 residues: UDP-glycosyltransferase 71B1 (473 aa).

Histidine 15 serves as the catalytic Proton acceptor. Histidine 15 lines the an anthocyanidin pocket. Residue aspartate 110 is the Charge relay of the active site. 8 residues coordinate UDP-alpha-D-glucose: threonine 132, alanine 342, glutamine 344, histidine 359, tryptophan 362, asparagine 363, serine 364, and glutamate 367. Residue alanine 382 participates in an anthocyanidin binding. 2 residues coordinate UDP-alpha-D-glucose: glutamate 383 and glutamine 384.

The protein belongs to the UDP-glycosyltransferase family.

It catalyses the reaction a flavonol + UDP-alpha-D-glucose = a flavonol 3-O-beta-D-glucoside + UDP + H(+). Possesses quercetin 3-O-glucosyltransferase activity in vitro. Also active in vitro on benzoates and benzoate derivatives. The protein is UDP-glycosyltransferase 71B1 (UGT71B1) of Arabidopsis thaliana (Mouse-ear cress).